Reading from the N-terminus, the 86-residue chain is Omega-theraphotoxin-Hhn1f 4 (86 aa).

The N-terminal stretch at 1 to 21 (MKSIVFVALFGLALLAVVCSA) is a signal peptide. A propeptide spanning residues 22-50 (SEDAHKELLKEVVRAMVVDKTDAVQAGER) is cleaved from the precursor. 3 disulfides stabilise this stretch: cysteine 52-cysteine 66, cysteine 59-cysteine 71, and cysteine 65-cysteine 78.

It belongs to the neurotoxin 10 (Hwtx-1) family. 17 (Hntx-9) subfamily. Expressed by the venom gland.

Its subcellular location is the secreted. Its function is as follows. Ion channel inhibitor. The chain is Omega-theraphotoxin-Hhn1f 4 from Cyriopagopus hainanus (Chinese bird spider).